We begin with the raw amino-acid sequence, 299 residues long: Acetylglutamate kinase (299 aa).

Substrate contacts are provided by residues 66-67 (GG), Arg-88, and Asn-196.

This sequence belongs to the acetylglutamate kinase family. ArgB subfamily.

It localises to the cytoplasm. It carries out the reaction N-acetyl-L-glutamate + ATP = N-acetyl-L-glutamyl 5-phosphate + ADP. It participates in amino-acid biosynthesis; L-arginine biosynthesis; N(2)-acetyl-L-ornithine from L-glutamate: step 2/4. In terms of biological role, catalyzes the ATP-dependent phosphorylation of N-acetyl-L-glutamate. This chain is Acetylglutamate kinase, found in Alcanivorax borkumensis (strain ATCC 700651 / DSM 11573 / NCIMB 13689 / SK2).